The following is a 469-amino-acid chain: Tetratricopeptide repeat protein 38 (469 aa).

An N-acetylalanine modification is found at alanine 2. Serine 5 bears the Phosphoserine mark. TPR repeat units lie at residues 108–141 (REQL…HPTD), 180–213 (SYVK…NPTD), and 252–285 (CHNY…SLQA).

It belongs to the TTC38 family.

In Pongo abelii (Sumatran orangutan), this protein is Tetratricopeptide repeat protein 38 (TTC38).